The primary structure comprises 95 residues: MRDIHPVSKPCVYNCVTCKKEFIIDSAAKNTEVAIEVCSNCHTFFIGKQNATTTLRGRAEKLNNRFEAGLNNINKKPEKKKIQGKSEPRKSLNEL.

The disordered stretch occupies residues 68–95 (AGLNNINKKPEKKKIQGKSEPRKSLNEL). A compositionally biased stretch (basic and acidic residues) spans 80–95 (KKIQGKSEPRKSLNEL).

It belongs to the bacterial ribosomal protein bL31 family. Type A subfamily. Part of the 50S ribosomal subunit.

Its function is as follows. Binds the 23S rRNA. This chain is Large ribosomal subunit protein bL31, found in Ureaplasma parvum serovar 3 (strain ATCC 700970).